A 162-amino-acid chain; its full sequence is Transcription elongation factor GreA (162 aa).

A coiled-coil region spans residues 45–65; sequence NAEYHAAKERQLFIEARINEL.

Belongs to the GreA/GreB family.

Its function is as follows. Necessary for efficient RNA polymerase transcription elongation past template-encoded arresting sites. The arresting sites in DNA have the property of trapping a certain fraction of elongating RNA polymerases that pass through, resulting in locked ternary complexes. Cleavage of the nascent transcript by cleavage factors such as GreA or GreB allows the resumption of elongation from the new 3'terminus. GreA releases sequences of 2 to 3 nucleotides. The polypeptide is Transcription elongation factor GreA (Wolinella succinogenes (strain ATCC 29543 / DSM 1740 / CCUG 13145 / JCM 31913 / LMG 7466 / NCTC 11488 / FDC 602W) (Vibrio succinogenes)).